The sequence spans 245 residues: Balbiani ring A 28 kDa protein (245 aa).

The N-terminal stretch at 1 to 16 (MKSIIKHILFVVLLIS) is a signal peptide. Serine 33, serine 40, serine 92, serine 93, and serine 115 each carry phosphoserine.

In terms of tissue distribution, salivary gland.

The protein resides in the secreted. In terms of biological role, used by the larvae to construct a supramolecular structure, the larval tube. In Chironomus thummi thummi (Midge), this protein is Balbiani ring A 28 kDa protein.